The primary structure comprises 78 residues: Acyl carrier protein (78 aa).

Positions 2–77 (SDTAERIKKI…DAVSYIDEHK (76 aa)) constitute a Carrier domain. The residue at position 37 (Ser-37) is an O-(pantetheine 4'-phosphoryl)serine.

Belongs to the acyl carrier protein (ACP) family. In terms of processing, 4'-phosphopantetheine is transferred from CoA to a specific serine of apo-ACP by AcpS. This modification is essential for activity because fatty acids are bound in thioester linkage to the sulfhydryl of the prosthetic group.

Its subcellular location is the cytoplasm. Its pathway is lipid metabolism; fatty acid biosynthesis. Its function is as follows. Carrier of the growing fatty acid chain in fatty acid biosynthesis. The protein is Acyl carrier protein of Zymomonas mobilis subsp. mobilis (strain ATCC 31821 / ZM4 / CP4).